The sequence spans 496 residues: NADH-quinone oxidoreductase subunit N (496 aa).

14 helical membrane-spanning segments follow: residues Leu-8–Ile-28, Met-37–Phe-57, Gln-73–Thr-93, Leu-110–Met-130, Tyr-131–Asp-151, Leu-162–Leu-182, Thr-203–Phe-223, Pro-235–Val-255, Gly-271–Phe-291, Met-300–Ile-320, Gly-341–Thr-361, Ala-386–Val-406, Val-421–Ile-441, and Phe-464–Ala-484.

It belongs to the complex I subunit 2 family. In terms of assembly, NDH-1 is composed of 14 different subunits. Subunits NuoA, H, J, K, L, M, N constitute the membrane sector of the complex.

It localises to the cell membrane. The catalysed reaction is a quinone + NADH + 5 H(+)(in) = a quinol + NAD(+) + 4 H(+)(out). In terms of biological role, NDH-1 shuttles electrons from NADH, via FMN and iron-sulfur (Fe-S) centers, to quinones in the respiratory chain. The immediate electron acceptor for the enzyme in this species is believed to be a menaquinone. Couples the redox reaction to proton translocation (for every two electrons transferred, four hydrogen ions are translocated across the cytoplasmic membrane), and thus conserves the redox energy in a proton gradient. The chain is NADH-quinone oxidoreductase subunit N from Desulfitobacterium hafniense (strain DSM 10664 / DCB-2).